A 553-amino-acid polypeptide reads, in one-letter code: ATP synthase F(1) complex subunit alpha, mitochondrial (553 aa).

Residues 1 to 43 (MLSVRVAAAVARALPRRAGLVSKNALGSSFVGARNLHASNTRL) constitute a mitochondrion transit peptide. Ser53 and Ser65 each carry phosphoserine. Ser76 carries the post-translational modification Phosphoserine; alternate. Ser76 carries an O-linked (GlcNAc) serine; alternate glycan. Ser106 is modified (phosphoserine). Lys123, Lys126, and Lys132 each carry N6-acetyllysine. Thr134 bears the Phosphothreonine mark. Lys161 is modified (N6-acetyllysine; alternate). Position 161 is an N6-succinyllysine; alternate (Lys161). At Ser166 the chain carries Phosphoserine. Lys167 is modified (N6-acetyllysine; alternate). An N6-succinyllysine; alternate modification is found at Lys167. Ser184 bears the Phosphoserine mark. Arg204 carries the post-translational modification Omega-N-methylarginine. Residues Gln215, Gly217, Lys218, Thr219, and Ser220 each coordinate ATP. Thr219 provides a ligand contact to Mg(2+). N6-acetyllysine; alternate is present on residues Lys230 and Lys239. Lys230 and Lys239 each carry N6-succinyllysine; alternate. An N6-acetyllysine modification is found at Lys240. 2 positions are modified to N6-acetyllysine; alternate: Lys261 and Lys305. N6-succinyllysine; alternate is present on residues Lys261 and Lys305. A Mg(2+)-binding site is contributed by Asp312. An N6-acetyllysine; alternate modification is found at Lys427. Position 427 is an N6-succinyllysine; alternate (Lys427). Lys434 is subject to N6-acetyllysine. Residues Gln473 and Gln475 each coordinate ATP. Lys498 and Lys506 each carry N6-acetyllysine; alternate. Lys498 and Lys506 each carry N6-succinyllysine; alternate. Phosphoserine is present on Ser521. Residues Lys531 and Lys539 each carry the N6-acetyllysine; alternate modification. Residues Lys531 and Lys539 each carry the N6-succinyllysine; alternate modification. The residue at position 541 (Lys541) is an N6-acetyllysine.

This sequence belongs to the ATPase alpha/beta chains family. Homotrimer. Component of the ATP synthase complex composed at least of ATP5F1A/subunit alpha, ATP5F1B/subunit beta, ATP5MC1/subunit c (homooctomer), MT-ATP6/subunit a, MT-ATP8/subunit 8, ATP5ME/subunit e, ATP5MF/subunit f, ATP5MG/subunit g, ATP5MK/subunit k, ATP5MJ/subunit j, ATP5F1C/subunit gamma, ATP5F1D/subunit delta, ATP5F1E/subunit epsilon, ATP5PF/subunit F6, ATP5PB/subunit b, ATP5PD/subunit d, ATP5PO/subunit OSCP. ATP synthase complex consists of a soluble F(1) head domain (subunits alpha(3) and beta(3)) - the catalytic core - and a membrane F(0) domain - the membrane proton channel (subunits c, a, 8, e, f, g, k and j). These two domains are linked by a central stalk (subunits gamma, delta, and epsilon) rotating inside the F1 region and a stationary peripheral stalk (subunits F6, b, d, and OSCP). Interacts with ATPAF2. Interacts with HRG; the interaction occurs on the surface of T-cells and alters the cell morphology when associated with concanavalin (in vitro). Interacts with PLG (angiostatin peptide); the interaction inhibits most of the angiogenic properties of angiostatin. Interacts with BLOC1S1. Interacts with BCL2L1 isoform BCL-X(L); the interaction mediates the association of BCL2L1 isoform BCL-X(L) with the mitochondrial membrane F(1)F(0) ATP synthase and enhances neurons metabolic efficiency. Interacts with CLN5 and PPT1. Interacts with S100A1; this interaction increases F1-ATPase activity. Interacts with ABCB7; this interaction allows the regulation of cellular iron homeostasis and cellular reactive oxygen species (ROS) levels in cardiomyocytes. In terms of processing, acetylated on lysine residues. BLOC1S1 is required for acetylation. Acetylation of Lys-132, Lys-230 and Lys-498 is observed in liver mitochondria from fasted mice but not from fed mice.

The protein localises to the mitochondrion inner membrane. It localises to the cell membrane. Its function is as follows. Subunit alpha, of the mitochondrial membrane ATP synthase complex (F(1)F(0) ATP synthase or Complex V) that produces ATP from ADP in the presence of a proton gradient across the membrane which is generated by electron transport complexes of the respiratory chain. ATP synthase complex consist of a soluble F(1) head domain - the catalytic core - and a membrane F(1) domain - the membrane proton channel. These two domains are linked by a central stalk rotating inside the F(1) region and a stationary peripheral stalk. During catalysis, ATP synthesis in the catalytic domain of F(1) is coupled via a rotary mechanism of the central stalk subunits to proton translocation. In vivo, can only synthesize ATP although its ATP hydrolase activity can be activated artificially in vitro. With the catalytic subunit beta (ATP5F1B), forms the catalytic core in the F(1) domain. Subunit alpha does not bear the catalytic high-affinity ATP-binding sites. This chain is ATP synthase F(1) complex subunit alpha, mitochondrial, found in Mus musculus (Mouse).